Consider the following 552-residue polypeptide: Probable ABC transporter ATP-binding/permease protein HI_0664 (552 aa).

6 helical membrane-spanning segments follow: residues 22–42, 52–72, 139–159, 162–182, 253–273, and 278–298; these read IMAF…FIMV, LNFD…VLAV, IAPI…FAQL, WFVL…PIIT, EVAV…LFSL, and FAAF…VIAL. Residues 23-307 enclose the ABC transmembrane type-1 domain; the sequence is MAFTITMGTL…LSNLSSNLLQ (285 aa). Residues 340 to 552 form the ABC transporter domain; it reads IDVENVNFAY…VIGIENGRMS (213 aa). An ATP-binding site is contributed by 372 to 379; the sequence is GRSGSGKS.

Belongs to the ABC transporter superfamily. Lipid exporter (TC 3.A.1.106) family.

It localises to the cell inner membrane. The polypeptide is Probable ABC transporter ATP-binding/permease protein HI_0664 (Haemophilus influenzae (strain ATCC 51907 / DSM 11121 / KW20 / Rd)).